A 444-amino-acid polypeptide reads, in one-letter code: MQVKETQNEGLKRGYEFTLPAADLAAQVDAKLKEAQPEVEMKGFRKGKVPMALLKKQFGQRIMGDAMQEAIDKALRDHLEKSGDRPALQPKIEMVNGETWKEGDDVVVTVAYEALPAIPEADLSGVELERLVVEASEEQVTEALENLAKNAQSFEDRKKGTKAKDGDQIVIDFKGMVDGEAFEGGSAEDYPLVLGSKSFIPGFEEQLVGAKAGDEVKVEVKFPEDYGHPALAGKDAVFETTVKAVKAPKAAEIDDELAKKFGAESLDALKGQIRERLEAEYKGASRQVLKRTLLDRLDEMVKFDLPESLVEAEAHQIAHQLWHEEHPEEHGHNHGEIEPTDEHKKLAERRVRLGLLLAEIGQKAEITVSDQEMTQAVLRQARQFPGQERAFFEFIQQNPQAQQQLRAPIFEDKVVDHIVEGAKVSEKPVTKDELEKAIEALDQV.

A PPIase FKBP-type domain is found at G166–A251.

The protein belongs to the FKBP-type PPIase family. Tig subfamily.

The protein localises to the cytoplasm. It catalyses the reaction [protein]-peptidylproline (omega=180) = [protein]-peptidylproline (omega=0). Its function is as follows. Involved in protein export. Acts as a chaperone by maintaining the newly synthesized protein in an open conformation. Functions as a peptidyl-prolyl cis-trans isomerase. This chain is Trigger factor, found in Paracoccus denitrificans (strain Pd 1222).